A 683-amino-acid polypeptide reads, in one-letter code: Long-chain fatty acid transport protein 3 (683 aa).

A helical transmembrane segment spans residues 3 to 23 (ALLLLPLLLLLPLLLLKLHLW). Residues 119–128 (GGDSGEGSAG) show a composition bias toward gly residues. The interval 119–145 (GGDSGEGSAGEGERAAPGAGDAAAGSG) is disordered. Residues 133 to 145 (AAPGAGDAAAGSG) are compositionally biased toward low complexity. ATP contacts are provided by residues 288-292 (TSGTT), H331, T428, D528, R543, and K635.

This sequence belongs to the ATP-dependent AMP-binding enzyme family. In terms of tissue distribution, expressed in bronchial and bronchiolar epithelial cells (at protein level).

The protein resides in the mitochondrion membrane. It catalyses the reaction a fatty acid(in) = a fatty acid(out). The catalysed reaction is a long-chain fatty acid + ATP + CoA = a long-chain fatty acyl-CoA + AMP + diphosphate. The enzyme catalyses hexadecanoate + ATP + CoA = hexadecanoyl-CoA + AMP + diphosphate. It carries out the reaction (9Z)-octadecenoate + ATP + CoA = (9Z)-octadecenoyl-CoA + AMP + diphosphate. It catalyses the reaction (9Z,12Z)-octadecadienoate + ATP + CoA = (9Z,12Z)-octadecadienoyl-CoA + AMP + diphosphate. The catalysed reaction is (5Z,8Z,11Z,14Z)-eicosatetraenoate + ATP + CoA = (5Z,8Z,11Z,14Z)-eicosatetraenoyl-CoA + AMP + diphosphate. The enzyme catalyses a very long-chain fatty acid + ATP + CoA = a very long-chain fatty acyl-CoA + AMP + diphosphate. It carries out the reaction tetracosanoate + ATP + CoA = tetracosanoyl-CoA + AMP + diphosphate. Mainly functions as an acyl-CoA ligase catalyzing the ATP-dependent formation of fatty acyl-CoA using LCFA and very-long-chain fatty acids (VLCFA) as substrates. Can mediate the levels of long-chain fatty acids (LCFA) in the cell by facilitating their transport across membranes. The sequence is that of Long-chain fatty acid transport protein 3 from Homo sapiens (Human).